The following is a 632-amino-acid chain: Threonine--tRNA ligase (632 aa).

The 61-residue stretch at 1–61 (MPIVTLPDGS…EHDAEVSILT (61 aa)) folds into the TGS domain. Residues 242 to 533 (DHRKLARKLD…LIEHYAGSMP (292 aa)) are catalytic. Zn(2+)-binding residues include C333, H384, and H510.

Belongs to the class-II aminoacyl-tRNA synthetase family. In terms of assembly, homodimer. Requires Zn(2+) as cofactor.

The protein localises to the cytoplasm. The enzyme catalyses tRNA(Thr) + L-threonine + ATP = L-threonyl-tRNA(Thr) + AMP + diphosphate + H(+). In terms of biological role, catalyzes the attachment of threonine to tRNA(Thr) in a two-step reaction: L-threonine is first activated by ATP to form Thr-AMP and then transferred to the acceptor end of tRNA(Thr). Also edits incorrectly charged L-seryl-tRNA(Thr). This is Threonine--tRNA ligase from Chromohalobacter salexigens (strain ATCC BAA-138 / DSM 3043 / CIP 106854 / NCIMB 13768 / 1H11).